The chain runs to 296 residues: Ribosomal RNA small subunit methyltransferase H (296 aa).

S-adenosyl-L-methionine is bound by residues 41-43 (GGY), Asp59, Phe86, Asp104, and Gln111.

The protein belongs to the methyltransferase superfamily. RsmH family.

The protein localises to the cytoplasm. The enzyme catalyses cytidine(1402) in 16S rRNA + S-adenosyl-L-methionine = N(4)-methylcytidine(1402) in 16S rRNA + S-adenosyl-L-homocysteine + H(+). In terms of biological role, specifically methylates the N4 position of cytidine in position 1402 (C1402) of 16S rRNA. In Neorickettsia sennetsu (strain ATCC VR-367 / Miyayama) (Ehrlichia sennetsu), this protein is Ribosomal RNA small subunit methyltransferase H.